The primary structure comprises 827 residues: Carnosine synthase 1 (827 aa).

The ATP-grasp domain maps to 516–720; it reads GPPWPAPSLH…LLLAAVMVAC (205 aa). 542–611 serves as a coordination point for ATP; sequence VHQVPLPGVM…MEFVEGTEHD (70 aa). Mg(2+)-binding residues include Glu677, Glu689, and Asn691. Residues Glu677, Glu689, and Asn691 each coordinate Mn(2+).

In terms of assembly, homotetramer. It depends on Mg(2+) as a cofactor. Requires Mn(2+) as cofactor.

It catalyses the reaction beta-alanine + L-histidine + ATP = carnosine + ADP + phosphate + H(+). The catalysed reaction is 4-aminobutanoate + L-histidine + ATP = L-homocarnosine + ADP + phosphate + H(+). Its function is as follows. Catalyzes the synthesis of carnosine and homocarnosine. Carnosine is synthesized more efficiently than homocarnosine. This Homo sapiens (Human) protein is Carnosine synthase 1.